Here is a 172-residue protein sequence, read N- to C-terminus: 3-phenylpropionate/cinnamic acid dioxygenase subunit beta (172 aa).

It belongs to the bacterial ring-hydroxylating dioxygenase beta subunit family. In terms of assembly, this dioxygenase system consists of four proteins: the two subunits of the hydroxylase component (HcaE and HcaF), a ferredoxin (HcaC) and a ferredoxin reductase (HcaD).

The catalysed reaction is 3-phenylpropanoate + NADH + O2 + H(+) = 3-(cis-5,6-dihydroxycyclohexa-1,3-dien-1-yl)propanoate + NAD(+). The enzyme catalyses (E)-cinnamate + NADH + O2 + H(+) = (2E)-3-(cis-5,6-dihydroxycyclohexa-1,3-dien-1-yl)prop-2-enoate + NAD(+). Its pathway is aromatic compound metabolism; 3-phenylpropanoate degradation. Part of the multicomponent 3-phenylpropionate dioxygenase. Converts 3-phenylpropionic acid (PP) and cinnamic acid (CI) into 3-phenylpropionate-dihydrodiol (PP-dihydrodiol) and cinnamic acid-dihydrodiol (CI-dihydrodiol), respectively. This Shigella flexneri serotype 5b (strain 8401) protein is 3-phenylpropionate/cinnamic acid dioxygenase subunit beta.